Reading from the N-terminus, the 556-residue chain is 2-isopropylmalate synthase (556 aa).

A Pyruvate carboxyltransferase domain is found at 33–307 (PIWCSSDLRD…HPQLDFSDID (275 aa)). Residues Asp-42, His-246, His-248, and Asn-282 each coordinate Mg(2+). The interval 439 to 556 (ATSPYALASH…AVTQAEAKAA (118 aa)) is regulatory domain.

This sequence belongs to the alpha-IPM synthase/homocitrate synthase family. LeuA type 2 subfamily. Homodimer. The cofactor is Mg(2+).

It localises to the cytoplasm. The catalysed reaction is 3-methyl-2-oxobutanoate + acetyl-CoA + H2O = (2S)-2-isopropylmalate + CoA + H(+). It functions in the pathway amino-acid biosynthesis; L-leucine biosynthesis; L-leucine from 3-methyl-2-oxobutanoate: step 1/4. In terms of biological role, catalyzes the condensation of the acetyl group of acetyl-CoA with 3-methyl-2-oxobutanoate (2-ketoisovalerate) to form 3-carboxy-3-hydroxy-4-methylpentanoate (2-isopropylmalate). The polypeptide is 2-isopropylmalate synthase (Pseudomonas paraeruginosa (strain DSM 24068 / PA7) (Pseudomonas aeruginosa (strain PA7))).